The chain runs to 602 residues: Aryl hydrocarbon receptor protein 1 (602 aa).

A propeptide spanning residues 1-2 (MY) is cleaved from the precursor. The span at 1–12 (MYASKRRQRNFK) shows a compositional bias: basic residues. The tract at residues 1 to 28 (MYASKRRQRNFKRVRDPPKQLTNTNPSK) is disordered. Short sequence motifs (nuclear localization signal) lie at residues 5–8 (KRRQ) and 28–33 (KRHRER). The region spanning 18–71 (PKQLTNTNPSKRHRERLNGELETVAMLLPYDSSTISRLDKLSVLRLAVSFLQCK) is the bHLH domain. 3 required for maintaining the overall integrity of the AHR:ARNT heterodimer and its transcriptional activity regions span residues 41–73 (VAML…CKAH), 133–141 (SLKSLGGFI), and 266–268 (ICV). The short motif at 55 to 63 (LDKLSVLRL) is the Nuclear export signal element. A PAS domain is found at 126 to 196 (ESNFEEISLK…QQLDSNFHIP (71 aa)). A disordered region spans residues 440 to 467 (STSNSLFPSVPVPTPTTTKANRRRKENS).

As to quaternary structure, interacts with daf-21/hsp90. Interacts with aha-1. As to expression, expressed in many distinct neuronal cells including RMED, RMEV, RMEL and RMER. Functions in URX neurons to promote aggregation behavior.

The protein localises to the nucleus. Probable ligand-activated transcriptional activator. Acts as a transcriptional regulator in GABAergic motor neuron cell fate specification and development. Promotes cell-type-specific expression of guanylate cyclase genes that have key roles in aggregation behavior and hyperoxia avoidance. Has no role in carbon dioxide avoidance. In Caenorhabditis elegans, this protein is Aryl hydrocarbon receptor protein 1.